Here is a 271-residue protein sequence, read N- to C-terminus: Delta(7)-sterol-C5(6)-desaturase (271 aa).

Helical transmembrane passes span 44-64 and 120-140; these read IGGVLLYFISGFLWCFYIYHL and VGWLSYVIYAAIYLVIVEFGI. Residues 130–259 enclose the Fatty acid hydroxylase domain; sequence AIYLVIVEFG…TIWMDWMFGT (130 aa). Positions 144 to 148 match the Histidine box-1 motif; sequence HMELH. The Histidine box-2 motif lies at 158 to 162; the sequence is HATHH. Residues 190–210 traverse the membrane as a helical segment; sequence HVVALLLVPMHFSTHIALIFL. Positions 235–239 match the Histidine box-3 motif; the sequence is HTIHH.

The protein belongs to the sterol desaturase family. Fe cation serves as cofactor.

The protein localises to the endoplasmic reticulum membrane. The enzyme catalyses a Delta(7)-sterol + 2 Fe(II)-[cytochrome b5] + O2 + 2 H(+) = a Delta(5),Delta(7)-sterol + 2 Fe(III)-[cytochrome b5] + 2 H2O. Its function is as follows. Involved in the biosynthesis of sitosterol and campesterol. The chain is Delta(7)-sterol-C5(6)-desaturase from Nicotiana tabacum (Common tobacco).